We begin with the raw amino-acid sequence, 335 residues long: Anthranilate phosphoribosyltransferase 2 (335 aa).

Residues G70, 73–74 (GD), T78, 80–83 (NIST), 98–106 (KHGNRSASS), and S110 each bind 5-phospho-alpha-D-ribose 1-diphosphate. Residue G70 coordinates anthranilate. A Mg(2+)-binding site is contributed by S82. N101 contacts anthranilate. R156 is an anthranilate binding site. Mg(2+)-binding residues include D215 and E216.

The protein belongs to the anthranilate phosphoribosyltransferase family. As to quaternary structure, homodimer. It depends on Mg(2+) as a cofactor.

The enzyme catalyses N-(5-phospho-beta-D-ribosyl)anthranilate + diphosphate = 5-phospho-alpha-D-ribose 1-diphosphate + anthranilate. The protein operates within amino-acid biosynthesis; L-tryptophan biosynthesis; L-tryptophan from chorismate: step 2/5. Its function is as follows. Catalyzes the transfer of the phosphoribosyl group of 5-phosphorylribose-1-pyrophosphate (PRPP) to anthranilate to yield N-(5'-phosphoribosyl)-anthranilate (PRA). The sequence is that of Anthranilate phosphoribosyltransferase 2 from Streptomyces coelicolor (strain ATCC BAA-471 / A3(2) / M145).